Consider the following 220-residue polypeptide: Vesicle-associated protein 2-1 (220 aa).

An N-acetylmethionine modification is found at methionine 1. Residues 1–196 (MTGVGENQLI…RNSGNGLSLK (196 aa)) are Cytoplasmic-facing. Residue threonine 2 is modified to N-acetylthreonine; in Vesicle-associated protein 2-1, N-terminally processed. The 121-residue stretch at 9 to 129 (LISIQPDELK…TECKLKVSYI (121 aa)) folds into the MSP domain. Residues 133–154 (TTQRSSESGATNGDGQSSETIS) are disordered. Positions 153-188 (ISTIQRLKEERDAAVKQTQQLQHELETVRRRRNQRN) form a coiled coil. The chain crosses the membrane as a helical; Anchor for type IV membrane protein span at residues 197–217 (LAAMVGLIGLIIGFILKLTLA).

Belongs to the VAMP-associated protein (VAP) (TC 9.B.17) family.

Its subcellular location is the endoplasmic reticulum membrane. In terms of biological role, may play a role in vesicle trafficking. The protein is Vesicle-associated protein 2-1 (PVA21) of Arabidopsis thaliana (Mouse-ear cress).